The primary structure comprises 107 residues: U1-lycotoxin-Ls1b (107 aa).

An N-terminal signal peptide occupies residues 1–20; sequence MMKVLVVIALLVTLISYSSS. Positions 21–41 are excised as a propeptide; that stretch reads EGIDDLEADELLSLMANEQTR. 4 disulfides stabilise this stretch: Cys-44–Cys-59, Cys-51–Cys-68, Cys-58–Cys-86, and Cys-70–Cys-84.

It belongs to the neurotoxin 19 (CSTX) family. 04 (U1-Lctx) subfamily. Expressed by the venom gland.

The protein resides in the secreted. The chain is U1-lycotoxin-Ls1b from Lycosa singoriensis (Wolf spider).